Here is a 194-residue protein sequence, read N- to C-terminus: Holliday junction branch migration complex subunit RuvA (194 aa).

Positions 1–64 are domain I; sequence MIGRLRGVLT…DDSAALYGFL (64 aa). The segment at 65 to 140 is domain II; it reads SESERRLFRH…RAADFNNGIS (76 aa). Positions 140-144 are flexible linker; that stretch reads STSGK. Positions 145–194 are domain III; the sequence is LNLDTVSEAALALQQLGYKPAEAARMARDAGTESDDVATVIKKALQAALC.

This sequence belongs to the RuvA family. Homotetramer. Forms an RuvA(8)-RuvB(12)-Holliday junction (HJ) complex. HJ DNA is sandwiched between 2 RuvA tetramers; dsDNA enters through RuvA and exits via RuvB. An RuvB hexamer assembles on each DNA strand where it exits the tetramer. Each RuvB hexamer is contacted by two RuvA subunits (via domain III) on 2 adjacent RuvB subunits; this complex drives branch migration. In the full resolvosome a probable DNA-RuvA(4)-RuvB(12)-RuvC(2) complex forms which resolves the HJ.

Its subcellular location is the cytoplasm. Its function is as follows. The RuvA-RuvB-RuvC complex processes Holliday junction (HJ) DNA during genetic recombination and DNA repair, while the RuvA-RuvB complex plays an important role in the rescue of blocked DNA replication forks via replication fork reversal (RFR). RuvA specifically binds to HJ cruciform DNA, conferring on it an open structure. The RuvB hexamer acts as an ATP-dependent pump, pulling dsDNA into and through the RuvAB complex. HJ branch migration allows RuvC to scan DNA until it finds its consensus sequence, where it cleaves and resolves the cruciform DNA. In Xylella fastidiosa (strain M12), this protein is Holliday junction branch migration complex subunit RuvA.